The following is a 331-amino-acid chain: Tagatose 1,6-diphosphate aldolase 2 (331 aa).

Belongs to the aldolase LacD family.

The enzyme catalyses D-tagatofuranose 1,6-bisphosphate = D-glyceraldehyde 3-phosphate + dihydroxyacetone phosphate. It participates in carbohydrate metabolism; D-tagatose 6-phosphate degradation; D-glyceraldehyde 3-phosphate and glycerone phosphate from D-tagatose 6-phosphate: step 2/2. This Enterococcus faecalis (strain ATCC 700802 / V583) protein is Tagatose 1,6-diphosphate aldolase 2 (lacD2).